The primary structure comprises 204 residues: MTSVSFLSKIQALFAPKPELPAAKWLVVGLGNPGAKYESTRHNVGYMCQDMLIDAHQQQPLTPATGYKALTTQLAPGVLAVRSTTFMNHSGQGVAPIAAALGIPAERIIVIHDELDLPAGKVRLKKGGNENGHNGLKSLTEELGTRDYLRVRIGISRPPAGMAVPDYVLEPVDHDQPGIELAAEAVDLLLAQGLSAAQNAIHSR.

Residue Tyr-37 participates in tRNA binding. His-42 functions as the Proton acceptor in the catalytic mechanism. Residues Phe-86, Asn-88, and Asn-134 each contribute to the tRNA site.

The protein belongs to the PTH family. As to quaternary structure, monomer.

It is found in the cytoplasm. It catalyses the reaction an N-acyl-L-alpha-aminoacyl-tRNA + H2O = an N-acyl-L-amino acid + a tRNA + H(+). In terms of biological role, hydrolyzes ribosome-free peptidyl-tRNAs (with 1 or more amino acids incorporated), which drop off the ribosome during protein synthesis, or as a result of ribosome stalling. Catalyzes the release of premature peptidyl moieties from peptidyl-tRNA molecules trapped in stalled 50S ribosomal subunits, and thus maintains levels of free tRNAs and 50S ribosomes. This is Peptidyl-tRNA hydrolase 2 from Corynebacterium glutamicum (strain ATCC 13032 / DSM 20300 / JCM 1318 / BCRC 11384 / CCUG 27702 / LMG 3730 / NBRC 12168 / NCIMB 10025 / NRRL B-2784 / 534).